The chain runs to 302 residues: MSDALVMAGEPLMSGNCFSQMHPVFKAFVCGSLSGTCSTLLFQPLDLVKTRLQAHQLSASAAGSRPRMLNLFIKVIRNENILGLWRGVSPSFLRCIPGVGLYFSTLYTLKHHFFSERDPKPLESVMLGAGSRTVAAVCMLPFTVVKTRYESGKYGYKSVYGALKNIYKTEGPRGLFSGLTATLMRDAPFSGIYLMFYTRAKKLVPQDQIDPLFSPVLNFGCGIVAGILASVATQPADVIKTHIQLSHEKCHWTGQVALNIYQNHGLTGFFRGGLPRALRRTLMAAMAWTVYEQMMEKMGLKS.

3 Solcar repeats span residues histidine 22 to histidine 112, proline 119 to leucine 203, and phenylalanine 213 to lysine 297. 6 helical membrane-spanning segments follow: residues phenylalanine 28–glutamine 53, glycine 87–phenylalanine 113, valine 125–glutamate 150, glycine 178–lysine 201, leucine 217–isoleucine 243, and glycine 272–valine 290.

It belongs to the mitochondrial carrier (TC 2.A.29) family. SLC25A38 subfamily.

The protein resides in the mitochondrion inner membrane. It catalyses the reaction glycine(in) = glycine(out). Functionally, mitochondrial glycine transporter that imports glycine into the mitochondrial matrix. Plays an important role in providing glycine for the first enzymatic step in heme biosynthesis, the condensation of glycine with succinyl-CoA to produce 5-aminolevulinate (ALA) in the mitochondrial matrix. Required during erythropoiesis. In terms of biological role, may play a role as pro-apoptotic protein that induces caspase-dependent apoptosis. This chain is Mitochondrial glycine transporter, found in Xenopus tropicalis (Western clawed frog).